A 277-amino-acid polypeptide reads, in one-letter code: Bis(5'-nucleosyl)-tetraphosphatase, symmetrical (277 aa).

The protein belongs to the Ap4A hydrolase family.

It catalyses the reaction P(1),P(4)-bis(5'-adenosyl) tetraphosphate + H2O = 2 ADP + 2 H(+). Functionally, hydrolyzes diadenosine 5',5'''-P1,P4-tetraphosphate to yield ADP. The chain is Bis(5'-nucleosyl)-tetraphosphatase, symmetrical from Methylobacillus flagellatus (strain ATCC 51484 / DSM 6875 / VKM B-1610 / KT).